The chain runs to 308 residues: Follistatin-related protein 1 (308 aa).

The first 20 residues, 1 to 20 (MWKRWLALALALVAVAWVRA), serve as a signal peptide directing secretion. Residues 30 to 53 (ICANVFCGAGRECAVTEKGEPTCL) form the Follistatin-like domain. Cystine bridges form between C31–C42, C36–C52, C54–C84, C58–C77, and C66–C98. Residues 48-100 (GEPTCLCIEQCKPHKRPVCGSNGKTYLNHCELHRDACLTGSKIQVDYDGHCKE) form the Kazal-like domain. A glycan (N-linked (GlcNAc...) asparagine) is linked at N144. One can recognise an EF-hand 1 domain in the interval 144–178 (NYSEILDKYFKNFDNGDSRLDSSEFLKFVEQNETA). S165 is subject to Phosphoserine. Residues N175 and N180 are each glycosylated (N-linked (GlcNAc...) asparagine). Residues 193–228 (LRGLCVDALIELSDENADWKLSFQEFLKCLNPSFNP) form the EF-hand 2 domain. The VWFC domain maps to 233–287 (CALEDETYADGAETEVDCNRCVCACGNWVCTAMTCDGKNQKGAQTQTEEEMTRYV).

As to quaternary structure, homodimer. Interacts with SCN10A. Interacts with DIP2A; DIP2A may act as a cell surface receptor for FSTL1. Interacts with BMP4. Interacts with CD14; this interaction promotes TL4-mediated signaling cascade.

It is found in the secreted. In terms of biological role, secreted glycoprotein that is involved in various physiological processes, such as angiogenesis, regulation of the immune response, cell proliferation and differentiation. Plays a role in the development of the central nervous system, skeletal system, lungs, and ureter. Promotes endothelial cell survival, migration and differentiation into network structures in an AKT-dependent manner. Also promotes survival of cardiac myocytes. Initiates various signaling cascades by activating different receptors on the cell surface such as DIP2A, TLR4 or BMP receptors. The protein is Follistatin-related protein 1 (FSTL1) of Macaca fascicularis (Crab-eating macaque).